The following is a 35-amino-acid chain: Alpha-amanitin proprotein 1 (35 aa).

Positions 1 to 10 (MFDTNATRLP) are excised as a propeptide. The residue at position 11 (Ile-11) is a (3R,4R)-4,5-dihydroxyisoleucine; in form alpha-amanitin. The residue at position 11 (Ile-11) is a (3R,4S)-4-hydroxyisoleucine; in form gamma-amanitin. Residues 11 to 18 (IWGIGCNP) constitute a cross-link (cyclopeptide (Ile-Pro)). The segment at residues 12–16 (WGIGC) is a cross-link (2'-cysteinyl-6'-hydroxytryptophan sulfoxide (Trp-Cys)). Pro-18 bears the 4-hydroxyproline mark. A propeptide spanning residues 19–35 (WTAEHVDQTLASGNDIC) is cleaved from the precursor.

This sequence belongs to the MSDIN fungal toxin family. Post-translationally, processed by the macrocyclase-peptidase enzyme POPB to yield a toxic bicyclic octapeptide. POPB first removes 10 residues from the N-terminus. Conformational trapping of the remaining peptide forces the enzyme to release this intermediate rather than proceed to macrocyclization. The enzyme rebinds the remaining peptide in a different conformation and catalyzes macrocyclization of the N-terminal 8 residues.

In terms of biological role, major toxin belonging to the bicyclic octapeptides amatoxins that acts by binding non-competitively to RNA polymerase II and greatly slowing the elongation of transcripts from target promoters. The polypeptide is Alpha-amanitin proprotein 1 (Galerina marginata (strain CBS 339.88)).